The primary structure comprises 621 residues: Very-long-chain aldehyde decarbonylase GL1-5 (621 aa).

The next 5 helical transmembrane spans lie at isoleucine 99 to leucine 119, glycine 126 to histidine 146, leucine 186 to phenylalanine 206, phenylalanine 224 to threonine 244, and methionine 332 to valine 352. Positions valine 138–threonine 272 constitute a Fatty acid hydroxylase domain.

Belongs to the sterol desaturase family. In terms of assembly, homodimer. Expressed in panicles, developing spikelets, stamens and hulls and, at low levels, in roots, developing seeds, flag leaves and seedling shoots. Strongly expressed in the epidermal cells of anthers.

It localises to the endoplasmic reticulum membrane. It carries out the reaction a long-chain fatty aldehyde + 2 NADPH + O2 + H(+) = a long-chain alkane + formate + 2 NADP(+) + H2O. Functionally, aldehyde decarbonylase involved in the conversion of aldehydes to alkanes. Core component of a very-long-chain alkane synthesis complex. Required for the biosynthesis of very-long-chain fatty acids (including polyesters) in cuticles, anther tapetum and pollen exine. The sequence is that of Very-long-chain aldehyde decarbonylase GL1-5 from Oryza sativa subsp. japonica (Rice).